The sequence spans 474 residues: Cysteine--tRNA ligase (474 aa).

Residue Cys-30 coordinates Zn(2+). The 'HIGH' region signature appears at 32–42; it reads PTVYNFAHIGN. Zn(2+)-binding residues include Cys-212, His-237, and Glu-241. Residues 270–274 carry the 'KMSKS' region motif; that stretch reads KMSKS. Lys-273 is a binding site for ATP.

It belongs to the class-I aminoacyl-tRNA synthetase family. In terms of assembly, monomer. Zn(2+) serves as cofactor.

The protein localises to the cytoplasm. The enzyme catalyses tRNA(Cys) + L-cysteine + ATP = L-cysteinyl-tRNA(Cys) + AMP + diphosphate. This chain is Cysteine--tRNA ligase, found in Leptospira borgpetersenii serovar Hardjo-bovis (strain JB197).